The chain runs to 591 residues: Isocitrate dehydrogenase kinase/phosphatase (591 aa).

Residues alanine 322–leucine 328 and lysine 343 contribute to the ATP site. Residue aspartate 378 is part of the active site.

This sequence belongs to the AceK family.

The protein localises to the cytoplasm. It catalyses the reaction L-seryl-[isocitrate dehydrogenase] + ATP = O-phospho-L-seryl-[isocitrate dehydrogenase] + ADP + H(+). In terms of biological role, bifunctional enzyme which can phosphorylate or dephosphorylate isocitrate dehydrogenase (IDH) on a specific serine residue. This is a regulatory mechanism which enables bacteria to bypass the Krebs cycle via the glyoxylate shunt in response to the source of carbon. When bacteria are grown on glucose, IDH is fully active and unphosphorylated, but when grown on acetate or ethanol, the activity of IDH declines drastically concomitant with its phosphorylation. The chain is Isocitrate dehydrogenase kinase/phosphatase from Aromatoleum aromaticum (strain DSM 19018 / LMG 30748 / EbN1) (Azoarcus sp. (strain EbN1)).